A 246-amino-acid polypeptide reads, in one-letter code: 1-(5-phosphoribosyl)-5-[(5-phosphoribosylamino)methylideneamino] imidazole-4-carboxamide isomerase (246 aa).

D10 acts as the Proton acceptor in catalysis. D135 serves as the catalytic Proton donor.

This sequence belongs to the HisA/HisF family.

It localises to the cytoplasm. It catalyses the reaction 1-(5-phospho-beta-D-ribosyl)-5-[(5-phospho-beta-D-ribosylamino)methylideneamino]imidazole-4-carboxamide = 5-[(5-phospho-1-deoxy-D-ribulos-1-ylimino)methylamino]-1-(5-phospho-beta-D-ribosyl)imidazole-4-carboxamide. The protein operates within amino-acid biosynthesis; L-histidine biosynthesis; L-histidine from 5-phospho-alpha-D-ribose 1-diphosphate: step 4/9. This Methanosarcina mazei (strain ATCC BAA-159 / DSM 3647 / Goe1 / Go1 / JCM 11833 / OCM 88) (Methanosarcina frisia) protein is 1-(5-phosphoribosyl)-5-[(5-phosphoribosylamino)methylideneamino] imidazole-4-carboxamide isomerase.